The primary structure comprises 398 residues: S-adenosylmethionine synthase (398 aa).

His-15 serves as a coordination point for ATP. Asp-17 is a Mg(2+) binding site. Glu-43 is a binding site for K(+). Glu-56 and Gln-99 together coordinate L-methionine. Residues 99–109 (QSPDIAQGVDT) are flexible loop. Residues 175–177 (DGK), 243–244 (RF), Asp-252, 258–259 (RK), Ala-275, and Lys-279 contribute to the ATP site. Position 252 (Asp-252) interacts with L-methionine. An L-methionine-binding site is contributed by Lys-283.

It belongs to the AdoMet synthase family. As to quaternary structure, homotetramer; dimer of dimers. Mg(2+) serves as cofactor. Requires K(+) as cofactor.

It is found in the cytoplasm. The enzyme catalyses L-methionine + ATP + H2O = S-adenosyl-L-methionine + phosphate + diphosphate. It functions in the pathway amino-acid biosynthesis; S-adenosyl-L-methionine biosynthesis; S-adenosyl-L-methionine from L-methionine: step 1/1. Its function is as follows. Catalyzes the formation of S-adenosylmethionine (AdoMet) from methionine and ATP. The overall synthetic reaction is composed of two sequential steps, AdoMet formation and the subsequent tripolyphosphate hydrolysis which occurs prior to release of AdoMet from the enzyme. The protein is S-adenosylmethionine synthase of Parafrankia sp. (strain EAN1pec).